A 407-amino-acid polypeptide reads, in one-letter code: Serpin-Z2 (407 aa).

Residues 1 to 28 (MDSKRKNQELSTSETADPSLSKTNKKQK) form a disordered region. The span at 9-22 (ELSTSETADPSLSK) shows a compositional bias: polar residues. The segment at 344–368 (GTEAAAATTVVVVTGSCLWEPKKKI) is RCL.

The protein belongs to the serpin family.

Probable serine protease inhibitor. This chain is Serpin-Z2, found in Arabidopsis thaliana (Mouse-ear cress).